Consider the following 373-residue polypeptide: 3 beta-hydroxysteroid dehydrogenase/Delta 5--&gt;4-isomerase type 1 (373 aa).

Residues 10–15 (GAGGFL), tyrosine 155, and lysine 159 each bind NADP(+). Catalysis depends on lysine 159, which acts as the Proton donor. A helical membrane pass occupies residues 288–308 (LSLMYWIGFLLEIVSFLLRPI).

It belongs to the 3-beta-HSD family. In terms of tissue distribution, placenta and skin. Predominantly expressed in mammary gland tissue.

It is found in the endoplasmic reticulum membrane. The protein localises to the mitochondrion membrane. It carries out the reaction a 3beta-hydroxy-Delta(5)-steroid + NAD(+) = a 3-oxo-Delta(5)-steroid + NADH + H(+). The enzyme catalyses pregnenolone + NAD(+) = pregn-5-ene-3,20-dione + NADH + H(+). The catalysed reaction is 3beta-hydroxyandrost-5-en-17-one + NAD(+) = androst-5-ene-3,17-dione + NADH + H(+). It catalyses the reaction androst-5-en-3beta,17beta-diol + NAD(+) = 17beta-hydroxy-androst-5-en-3-one + NADH + H(+). It carries out the reaction a 3beta-hydroxysteroid + NADP(+) = a 3-oxosteroid + NADPH + H(+). The enzyme catalyses 5alpha-androstane-3beta,17beta-diol + NADP(+) = 17beta-hydroxy-5alpha-androstan-3-one + NADPH + H(+). The catalysed reaction is 3beta-hydroxy-5alpha-androstan-17-one + NADP(+) = 5alpha-androstan-3,17-dione + NADPH + H(+). It catalyses the reaction a 3-oxo-Delta(5)-steroid = a 3-oxo-Delta(4)-steroid. It carries out the reaction pregn-5-ene-3,20-dione = progesterone. The enzyme catalyses androst-5-ene-3,17-dione = androst-4-ene-3,17-dione. The catalysed reaction is 17beta-hydroxy-androst-5-en-3-one = testosterone. It catalyses the reaction 5alpha-androstane-3beta,17beta-diol + NAD(+) = 17beta-hydroxy-5alpha-androstan-3-one + NADH + H(+). It participates in steroid hormone biosynthesis. It functions in the pathway steroid metabolism. Its function is as follows. A bifunctional enzyme responsible for the oxidation and isomerization of 3beta-hydroxy-Delta(5)-steroid precursors to 3-oxo-Delta(4)-steroids, an essential step in steroid hormone biosynthesis. Specifically catalyzes the conversion of pregnenolone to progesterone, 17alpha-hydroxypregnenolone to 17alpha-hydroxyprogesterone, dehydroepiandrosterone (DHEA) to 4-androstenedione, and androstenediol to testosterone. Additionally, catalyzes the interconversion between 3beta-hydroxy and 3-oxo-5alpha-androstane steroids controlling the bioavalability of the active forms. Specifically converts dihydrotestosterone to its inactive form 5alpha-androstanediol, that does not bind androgen receptor/AR. Also converts androstanedione, a precursor of testosterone and estrone, to epiandrosterone. Expected to use NAD(+) as preferred electron donor for the 3beta-hydroxy-steroid dehydrogenase activity and NADPH for the 3-ketosteroid reductase activity. This Homo sapiens (Human) protein is 3 beta-hydroxysteroid dehydrogenase/Delta 5--&gt;4-isomerase type 1.